The sequence spans 418 residues: MADGYENHAPENLQGKYQAMVVCCILGIGSLFSWNSMLTIADYYYQVFPDYHPSRVFTLIYQPIALGTIMILAYRESKISTRKRILTGYILFTISTFLLIVLDLTTKGHGGIGHYIVLCTIVASFGLADATVKGGLVGDLSLMCPELIQSYMAGSGMAGALTSVLRLITKAAFEKSNNSLRKGAMIFLAISTFIELLCVILYAYVFPKLPIVKYYRRKAASEGSKTVVADLAAAGIQNLSDLSDDDSKNQMLRKKELLLQNIDHAVNLFLIYVLTLSIFPGFLYENTGQHGLGDWYALILVATYNFWDLFGRYAPLVKWLKLENRKALTIAVLTRYFLVPAFYFTAKYGDKGWMIMLVSILGLTTGHLTVCIMTIAPNGYKGPEKNALGNLLVVFILGGAVVGISLGWLWLIGKKYAF.

11 helical membrane passes run 20–40 (MVVCCILGIGSLFSWNSMLTI), 54–74 (SRVFTLIYQPIALGTIMILAY), 85–105 (ILTGYILFTISTFLLIVLDLT), 108–128 (GHGGIGHYIVLCTIVASFGLA), 147–169 (LIQSYMAGSGMAGALTSVLRLIT), 186–206 (IFLAISTFIELLCVILYAYVF), 264–284 (HAVNLFLIYVLTLSIFPGFLY), 291–311 (GLGDWYALILVATYNFWDLFG), 326–346 (KALTIAVLTRYFLVPAFYFTA), 353–373 (WMIMLVSILGLTTGHLTVCIM), and 392–412 (LVVFILGGAVVGISLGWLWLI).

It belongs to the SLC29A/ENT transporter (TC 2.A.57) family. As to expression, expressed in leaves and at lowe levels in stems and flowers.

It localises to the cell membrane. In terms of biological role, nucleoside transporter that can mediate uptake of adenosine, uridine, guanosine or cytidine when expressed in a heterologous system (yeast). In Arabidopsis thaliana (Mouse-ear cress), this protein is Equilibrative nucleotide transporter 4 (ENT4).